Reading from the N-terminus, the 225-residue chain is NAD(P)H-quinone oxidoreductase subunit K, chloroplastic (225 aa).

[4Fe-4S] cluster contacts are provided by cysteine 43, cysteine 44, cysteine 108, and cysteine 139.

The protein belongs to the complex I 20 kDa subunit family. As to quaternary structure, NDH is composed of at least 16 different subunits, 5 of which are encoded in the nucleus. The cofactor is [4Fe-4S] cluster.

The protein localises to the plastid. The protein resides in the chloroplast thylakoid membrane. It catalyses the reaction a plastoquinone + NADH + (n+1) H(+)(in) = a plastoquinol + NAD(+) + n H(+)(out). The enzyme catalyses a plastoquinone + NADPH + (n+1) H(+)(in) = a plastoquinol + NADP(+) + n H(+)(out). Its function is as follows. NDH shuttles electrons from NAD(P)H:plastoquinone, via FMN and iron-sulfur (Fe-S) centers, to quinones in the photosynthetic chain and possibly in a chloroplast respiratory chain. The immediate electron acceptor for the enzyme in this species is believed to be plastoquinone. Couples the redox reaction to proton translocation, and thus conserves the redox energy in a proton gradient. The chain is NAD(P)H-quinone oxidoreductase subunit K, chloroplastic from Populus trichocarpa (Western balsam poplar).